A 788-amino-acid chain; its full sequence is Phosphoribosylformylglycinamidine synthase subunit PurL (788 aa).

His-50 is an active-site residue. ATP contacts are provided by Tyr-53 and Lys-92. Residue Glu-94 coordinates Mg(2+). Residues 95–98 (SHNH) and Arg-117 contribute to the substrate site. His-96 acts as the Proton acceptor in catalysis. Asp-118 is a binding site for Mg(2+). Gln-241 contacts substrate. Asp-269 serves as a coordination point for Mg(2+). 313 to 315 (ESQ) is a substrate binding site. ATP is bound by residues Asp-524 and Gly-561. Residue Asn-562 participates in Mg(2+) binding. Position 564 (Ser-564) interacts with substrate.

Belongs to the FGAMS family. As to quaternary structure, monomer. Part of the FGAM synthase complex composed of 1 PurL, 1 PurQ and 2 PurS subunits.

The protein localises to the cytoplasm. The catalysed reaction is N(2)-formyl-N(1)-(5-phospho-beta-D-ribosyl)glycinamide + L-glutamine + ATP + H2O = 2-formamido-N(1)-(5-O-phospho-beta-D-ribosyl)acetamidine + L-glutamate + ADP + phosphate + H(+). It participates in purine metabolism; IMP biosynthesis via de novo pathway; 5-amino-1-(5-phospho-D-ribosyl)imidazole from N(2)-formyl-N(1)-(5-phospho-D-ribosyl)glycinamide: step 1/2. In terms of biological role, part of the phosphoribosylformylglycinamidine synthase complex involved in the purines biosynthetic pathway. Catalyzes the ATP-dependent conversion of formylglycinamide ribonucleotide (FGAR) and glutamine to yield formylglycinamidine ribonucleotide (FGAM) and glutamate. The FGAM synthase complex is composed of three subunits. PurQ produces an ammonia molecule by converting glutamine to glutamate. PurL transfers the ammonia molecule to FGAR to form FGAM in an ATP-dependent manner. PurS interacts with PurQ and PurL and is thought to assist in the transfer of the ammonia molecule from PurQ to PurL. The chain is Phosphoribosylformylglycinamidine synthase subunit PurL from Nostoc punctiforme (strain ATCC 29133 / PCC 73102).